We begin with the raw amino-acid sequence, 661 residues long: UvrABC system protein B (661 aa).

Residues 25–182 (KGLNNKKRSQ…NDLVNLQYER (158 aa)) enclose the Helicase ATP-binding domain. 38–45 (GITGSGKT) is a binding site for ATP. Positions 91–114 (YYDYYQPEAYIPKTDVFIEKDSSI) match the Beta-hairpin motif. The Helicase C-terminal domain maps to 430–592 (QVEDLVGEIQ…IIPKTINRTI (163 aa)). Residues 621-656 (KAHIDKLRKEMLKAASNLEFEQAAKLRDQLKTLEEA) form the UVR domain.

Belongs to the UvrB family. Forms a heterotetramer with UvrA during the search for lesions. Interacts with UvrC in an incision complex.

The protein localises to the cytoplasm. Functionally, the UvrABC repair system catalyzes the recognition and processing of DNA lesions. A damage recognition complex composed of 2 UvrA and 2 UvrB subunits scans DNA for abnormalities. Upon binding of the UvrA(2)B(2) complex to a putative damaged site, the DNA wraps around one UvrB monomer. DNA wrap is dependent on ATP binding by UvrB and probably causes local melting of the DNA helix, facilitating insertion of UvrB beta-hairpin between the DNA strands. Then UvrB probes one DNA strand for the presence of a lesion. If a lesion is found the UvrA subunits dissociate and the UvrB-DNA preincision complex is formed. This complex is subsequently bound by UvrC and the second UvrB is released. If no lesion is found, the DNA wraps around the other UvrB subunit that will check the other stand for damage. The sequence is that of UvrABC system protein B from Rickettsia bellii (strain RML369-C).